The sequence spans 28 residues: Dermaseptin-2.2TR (28 aa).

Expressed by the skin glands.

It localises to the secreted. In terms of biological role, has antimicrobial activity. The chain is Dermaseptin-2.2TR from Phyllomedusa trinitatis (Trinidad leaf frog).